The sequence spans 623 residues: Glutathione import ATP-binding protein GsiA (623 aa).

2 ABC transporter domains span residues 15 to 269 (VENL…RALL) and 314 to 564 (LRVR…RKLL). Residues 49-56 (GESGSGKS) and 357-364 (GESGSGKS) each bind ATP.

The protein belongs to the ABC transporter superfamily. Glutathione importer (TC 3.A.1.5.11) family. The complex is composed of two ATP-binding proteins (GsiA), two transmembrane proteins (GsiC and GsiD) and a solute-binding protein (GsiB).

The protein localises to the cell inner membrane. It catalyses the reaction glutathione(out) + ATP + H2O = glutathione(in) + ADP + phosphate + H(+). Its activity is regulated as follows. Inhibited by verapamil but not by carbonyl cyanide m-chlorophenylhydrazone (CCCP). Part of the ABC transporter complex GsiABCD involved in glutathione import. Responsible for energy coupling to the transport system. The chain is Glutathione import ATP-binding protein GsiA from Escherichia coli (strain K12).